A 303-amino-acid polypeptide reads, in one-letter code: Kanosamine kinase (303 aa).

This sequence belongs to the ROK (NagC/XylR) family.

The catalysed reaction is kanosamine + ATP = D-kanosamine 6-phosphate + ADP + H(+). It participates in antibiotic biosynthesis; rifamycin B biosynthesis. With respect to regulation, inhibited by Zn(2+), Cu(2+), and Fe(2+). In terms of biological role, involved in the biosynthesis of 3-amino-5-hydroxybenzoate (AHBA), a compound that then serves as the starter unit for the assembly of a polyketide during the biosynthesis of rifamycin B and other ansamycin antibiotics. Catalyzes only the phosphorylation of kanosamine to yield kanosamine 6-phosphate. The polypeptide is Kanosamine kinase (rifN) (Amycolatopsis mediterranei (strain S699) (Nocardia mediterranei)).